A 446-amino-acid chain; its full sequence is NADH-quinone oxidoreductase subunit D (446 aa).

It belongs to the complex I 49 kDa subunit family. NDH-1 is composed of 14 different subunits. Subunits NuoB, C, D, E, F, and G constitute the peripheral sector of the complex.

The protein resides in the cell membrane. It catalyses the reaction a quinone + NADH + 5 H(+)(in) = a quinol + NAD(+) + 4 H(+)(out). Functionally, NDH-1 shuttles electrons from NADH, via FMN and iron-sulfur (Fe-S) centers, to quinones in the respiratory chain. The immediate electron acceptor for the enzyme in this species is believed to be a menaquinone. Couples the redox reaction to proton translocation (for every two electrons transferred, four hydrogen ions are translocated across the cytoplasmic membrane), and thus conserves the redox energy in a proton gradient. In Mycobacterium sp. (strain JLS), this protein is NADH-quinone oxidoreductase subunit D.